The following is a 140-amino-acid chain: Small ribosomal subunit protein uS12 (140 aa).

Disordered regions lie at residues 36 to 56 and 117 to 140; these read TYNP…MTPK and TSGV…EKKE.

This sequence belongs to the universal ribosomal protein uS12 family. In terms of assembly, part of the 30S ribosomal subunit. Contacts proteins S8 and S17. May interact with IF1 in the 30S initiation complex.

Functionally, with S4 and S5 plays an important role in translational accuracy. Interacts with and stabilizes bases of the 16S rRNA that are involved in tRNA selection in the A site and with the mRNA backbone. Located at the interface of the 30S and 50S subunits, it traverses the body of the 30S subunit contacting proteins on the other side and probably holding the rRNA structure together. The combined cluster of proteins S8, S12 and S17 appears to hold together the shoulder and platform of the 30S subunit. The protein is Small ribosomal subunit protein uS12 of Malacoplasma penetrans (strain HF-2) (Mycoplasma penetrans).